A 475-amino-acid polypeptide reads, in one-letter code: Aspartyl/glutamyl-tRNA(Asn/Gln) amidotransferase subunit B (475 aa).

It belongs to the GatB/GatE family. GatB subfamily. Heterotrimer of A, B and C subunits.

It carries out the reaction L-glutamyl-tRNA(Gln) + L-glutamine + ATP + H2O = L-glutaminyl-tRNA(Gln) + L-glutamate + ADP + phosphate + H(+). The enzyme catalyses L-aspartyl-tRNA(Asn) + L-glutamine + ATP + H2O = L-asparaginyl-tRNA(Asn) + L-glutamate + ADP + phosphate + 2 H(+). Its function is as follows. Allows the formation of correctly charged Asn-tRNA(Asn) or Gln-tRNA(Gln) through the transamidation of misacylated Asp-tRNA(Asn) or Glu-tRNA(Gln) in organisms which lack either or both of asparaginyl-tRNA or glutaminyl-tRNA synthetases. The reaction takes place in the presence of glutamine and ATP through an activated phospho-Asp-tRNA(Asn) or phospho-Glu-tRNA(Gln). The chain is Aspartyl/glutamyl-tRNA(Asn/Gln) amidotransferase subunit B from Staphylococcus saprophyticus subsp. saprophyticus (strain ATCC 15305 / DSM 20229 / NCIMB 8711 / NCTC 7292 / S-41).